The chain runs to 81 residues: Small ribosomal subunit protein bS16 (81 aa).

The protein belongs to the bacterial ribosomal protein bS16 family.

This Alkaliphilus oremlandii (strain OhILAs) (Clostridium oremlandii (strain OhILAs)) protein is Small ribosomal subunit protein bS16.